A 43-amino-acid polypeptide reads, in one-letter code: Augerpeptide hhe9.2 (43 aa).

Residues 2-40 enclose the EGF-like domain; it reads EEVGCFPNVCKNDGNCSIETSTGMTRCQCLEGYTGHVCE. 3 disulfide bridges follow: cysteine 6–cysteine 28, cysteine 11–cysteine 30, and cysteine 17–cysteine 39.

In terms of tissue distribution, expressed by the venom duct.

It is found in the secreted. This chain is Augerpeptide hhe9.2, found in Hastula hectica (Sea snail).